Consider the following 448-residue polypeptide: Histidine--tRNA ligase (448 aa).

The protein belongs to the class-II aminoacyl-tRNA synthetase family. As to quaternary structure, homodimer.

It is found in the cytoplasm. The enzyme catalyses tRNA(His) + L-histidine + ATP = L-histidyl-tRNA(His) + AMP + diphosphate + H(+). This is Histidine--tRNA ligase from Treponema denticola (strain ATCC 35405 / DSM 14222 / CIP 103919 / JCM 8153 / KCTC 15104).